We begin with the raw amino-acid sequence, 79 residues long: ATP synthase subunit c (79 aa).

2 helical membrane-spanning segments follow: residues 7 to 27 (VSGMAALGAGIAALACIGAGI) and 56 to 76 (IGSAFSEATAIYGLIIALFLI).

This sequence belongs to the ATPase C chain family. As to quaternary structure, F-type ATPases have 2 components, F(1) - the catalytic core - and F(0) - the membrane proton channel. F(1) has five subunits: alpha(3), beta(3), gamma(1), delta(1), epsilon(1). F(0) has three main subunits: a(1), b(2) and c(10-14). The alpha and beta chains form an alternating ring which encloses part of the gamma chain. F(1) is attached to F(0) by a central stalk formed by the gamma and epsilon chains, while a peripheral stalk is formed by the delta and b chains.

The protein localises to the cell membrane. F(1)F(0) ATP synthase produces ATP from ADP in the presence of a proton or sodium gradient. F-type ATPases consist of two structural domains, F(1) containing the extramembraneous catalytic core and F(0) containing the membrane proton channel, linked together by a central stalk and a peripheral stalk. During catalysis, ATP synthesis in the catalytic domain of F(1) is coupled via a rotary mechanism of the central stalk subunits to proton translocation. Functionally, key component of the F(0) channel; it plays a direct role in translocation across the membrane. A homomeric c-ring of between 10-14 subunits forms the central stalk rotor element with the F(1) delta and epsilon subunits. This is ATP synthase subunit c from Clostridium botulinum (strain Hall / ATCC 3502 / NCTC 13319 / Type A).